The primary structure comprises 220 residues: Sec-independent protein translocase protein TatB (220 aa).

Residues 1-21 (MFDIGFSELLLVLVIGLVVLG) traverse the membrane as a helical segment. Residues 192 to 220 (KQQIDTIDSHGTDLSSAGPSRIHQPGGDQ) form a disordered region.

It belongs to the TatB family. The Tat system comprises two distinct complexes: a TatABC complex, containing multiple copies of TatA, TatB and TatC subunits, and a separate TatA complex, containing only TatA subunits. Substrates initially bind to the TatABC complex, which probably triggers association of the separate TatA complex to form the active translocon.

The protein localises to the cell inner membrane. Functionally, part of the twin-arginine translocation (Tat) system that transports large folded proteins containing a characteristic twin-arginine motif in their signal peptide across membranes. Together with TatC, TatB is part of a receptor directly interacting with Tat signal peptides. TatB may form an oligomeric binding site that transiently accommodates folded Tat precursor proteins before their translocation. The chain is Sec-independent protein translocase protein TatB from Yersinia pestis bv. Antiqua (strain Antiqua).